Reading from the N-terminus, the 122-residue chain is Holo-[acyl-carrier-protein] synthase (122 aa).

2 residues coordinate Mg(2+): Asp-8 and Glu-56.

This sequence belongs to the P-Pant transferase superfamily. AcpS family. Mg(2+) is required as a cofactor.

It localises to the cytoplasm. It catalyses the reaction apo-[ACP] + CoA = holo-[ACP] + adenosine 3',5'-bisphosphate + H(+). Transfers the 4'-phosphopantetheine moiety from coenzyme A to a Ser of acyl-carrier-protein. The protein is Holo-[acyl-carrier-protein] synthase of Streptomyces griseus subsp. griseus (strain JCM 4626 / CBS 651.72 / NBRC 13350 / KCC S-0626 / ISP 5235).